The chain runs to 392 residues: Phosphoglycerate kinase (392 aa).

Substrate-binding positions include 21–23 (DLN), R36, 59–62 (HLGR), R114, and R147. ATP contacts are provided by residues K198, E320, and 346 to 349 (GGDT).

Belongs to the phosphoglycerate kinase family. Monomer.

The protein resides in the cytoplasm. The enzyme catalyses (2R)-3-phosphoglycerate + ATP = (2R)-3-phospho-glyceroyl phosphate + ADP. It functions in the pathway carbohydrate degradation; glycolysis; pyruvate from D-glyceraldehyde 3-phosphate: step 2/5. This is Phosphoglycerate kinase from Nitrosomonas eutropha (strain DSM 101675 / C91 / Nm57).